Reading from the N-terminus, the 278-residue chain is Non-heme chloroperoxidase (278 aa).

Residues 24–259 (PIVFHHGWPL…LKTYPGYSHG (236 aa)) form the AB hydrolase-1 domain. Catalysis depends on residues S97, D229, and H258.

This sequence belongs to the AB hydrolase superfamily. Bacterial non-heme haloperoxidase / perhydrolase family. Homodimer.

Its function is as follows. Chlorinates and brominates suitable organic compounds. Involved in the biosynthesis of the antibiotic pyrrolnitrin. This chain is Non-heme chloroperoxidase (cpo), found in Burkholderia pyrrocinia (Pseudomonas pyrrocinia).